The chain runs to 124 residues: Putative membrane protein insertion efficiency factor (124 aa).

This sequence belongs to the UPF0161 family.

Its subcellular location is the cell inner membrane. In terms of biological role, could be involved in insertion of integral membrane proteins into the membrane. This is Putative membrane protein insertion efficiency factor from Psychrobacter arcticus (strain DSM 17307 / VKM B-2377 / 273-4).